Here is a 131-residue protein sequence, read N- to C-terminus: uncharacterized protein (131 aa).

3 consecutive transmembrane segments (helical) span residues 13 to 35, 60 to 79, and 100 to 119; these read RFIK…TFPI, LVAL…TYVC, and LFEI…WNIT.

The protein localises to the membrane. This is an uncharacterized protein from Saccharomyces cerevisiae (strain ATCC 204508 / S288c) (Baker's yeast).